The sequence spans 396 residues: Metallophosphoesterase 1 (396 aa).

Residues 27 to 47 form a helical membrane-spanning segment; it reads IAVVFAVLLFCEFLIYYLAIF. A divalent metal cation-binding residues include aspartate 77, aspartate 119, asparagine 157, histidine 249, histidine 303, and histidine 305. Residues 356–376 form a helical membrane-spanning segment; sequence VVLVIYCGAVGFLVVLTLSHL. Positions 392 to 396 match the Di-lysine motif motif; that stretch reads KRKTR.

This sequence belongs to the metallophosphoesterase superfamily. MPPE1 family. In terms of assembly, interacts with GPI-anchor proteins (via the GPI portion). Interacts with TMED10. Mn(2+) serves as cofactor.

Its subcellular location is the endoplasmic reticulum-Golgi intermediate compartment membrane. In terms of biological role, metallophosphoesterase that catalyzes the removal of a side-chain ethanolamine-phosphate (EtNP) from the second mannose of the GPI-anchor protein intermediate. Participates in the glycan remodeling steps of GPI-anchor maturation to allow an efficient transport of GPI-anchor proteins from the endoplasmic reticulum to the Golgi. The sequence is that of Metallophosphoesterase 1 from Macaca fascicularis (Crab-eating macaque).